The following is a 362-amino-acid chain: Putative lipoprotein YdaJ (362 aa).

An N-terminal signal peptide occupies residues 1–20 (MRHVLIAVILFFLSIGLSAG). Cysteine 21 is lipidated: N-palmitoyl cysteine. Cysteine 21 carries S-diacylglycerol cysteine lipidation.

It is found in the cell membrane. This chain is Putative lipoprotein YdaJ (ydaJ), found in Bacillus subtilis (strain 168).